The following is a 448-amino-acid chain: Exodeoxyribonuclease 7 large subunit (448 aa).

Belongs to the XseA family. In terms of assembly, heterooligomer composed of large and small subunits.

The protein resides in the cytoplasm. It catalyses the reaction Exonucleolytic cleavage in either 5'- to 3'- or 3'- to 5'-direction to yield nucleoside 5'-phosphates.. Bidirectionally degrades single-stranded DNA into large acid-insoluble oligonucleotides, which are then degraded further into small acid-soluble oligonucleotides. This is Exodeoxyribonuclease 7 large subunit from Shewanella baltica (strain OS155 / ATCC BAA-1091).